The chain runs to 279 residues: Urease accessory protein UreD (279 aa).

This sequence belongs to the UreD family. UreD, UreF and UreG form a complex that acts as a GTP-hydrolysis-dependent molecular chaperone, activating the urease apoprotein by helping to assemble the nickel containing metallocenter of UreC. The UreE protein probably delivers the nickel.

It localises to the cytoplasm. Required for maturation of urease via the functional incorporation of the urease nickel metallocenter. The polypeptide is Urease accessory protein UreD (Trichodesmium erythraeum (strain IMS101)).